Here is a 298-residue protein sequence, read N- to C-terminus: Bifunctional protein FolD (298 aa).

NADP(+)-binding positions include 165–167 (GRS), Ser190, and Ile231.

This sequence belongs to the tetrahydrofolate dehydrogenase/cyclohydrolase family. As to quaternary structure, homodimer.

It carries out the reaction (6R)-5,10-methylene-5,6,7,8-tetrahydrofolate + NADP(+) = (6R)-5,10-methenyltetrahydrofolate + NADPH. It catalyses the reaction (6R)-5,10-methenyltetrahydrofolate + H2O = (6R)-10-formyltetrahydrofolate + H(+). The protein operates within one-carbon metabolism; tetrahydrofolate interconversion. In terms of biological role, catalyzes the oxidation of 5,10-methylenetetrahydrofolate to 5,10-methenyltetrahydrofolate and then the hydrolysis of 5,10-methenyltetrahydrofolate to 10-formyltetrahydrofolate. The polypeptide is Bifunctional protein FolD (Prochlorococcus marinus (strain MIT 9301)).